We begin with the raw amino-acid sequence, 214 residues long: Fruiting body protein SC14 (214 aa).

The signal sequence occupies residues 1–18 (MKLNIAILLAALAATASA). Residues N61 and N144 are each glycosylated (N-linked (GlcNAc...) asparagine). One can recognise an SCP domain in the interval 72–195 (LTAHNDERAQ…KSLWYYVCNY (124 aa)).

The protein belongs to the CRISP family.

Its subcellular location is the secreted. This Schizophyllum commune (Split gill fungus) protein is Fruiting body protein SC14 (SC14).